Here is a 365-residue protein sequence, read N- to C-terminus: Cobalt-precorrin-5B C(1)-methyltransferase (365 aa).

Belongs to the CbiD family.

The catalysed reaction is Co-precorrin-5B + S-adenosyl-L-methionine = Co-precorrin-6A + S-adenosyl-L-homocysteine. It functions in the pathway cofactor biosynthesis; adenosylcobalamin biosynthesis; cob(II)yrinate a,c-diamide from sirohydrochlorin (anaerobic route): step 6/10. Its function is as follows. Catalyzes the methylation of C-1 in cobalt-precorrin-5B to form cobalt-precorrin-6A. This Polaromonas naphthalenivorans (strain CJ2) protein is Cobalt-precorrin-5B C(1)-methyltransferase.